Reading from the N-terminus, the 335-residue chain is Nucleoid-associated protein YejK (335 aa).

This sequence belongs to the YejK family.

The protein localises to the cytoplasm. It is found in the nucleoid. The sequence is that of Nucleoid-associated protein YejK from Salmonella enteritidis PT4 (strain P125109).